The following is a 196-amino-acid chain: MNYNIYVCGVGGQGIIKTSVIIGEAAMKKDINVVMSEIHGMAQRGGSVSTEIRIGEVHGSIIPDGEADLVLAFEPLEAIRALPKMSEESEVILNTSVIPPFNLMRSPHPYPPLDEIMSTLEERAGSVRGFNAEEIALKAGHILSLNMVMLGAAAATPGFPLESESLISSMRDNLPSRLIDVNLRAFRDGFGAAAES.

In terms of assembly, heterodimer of the IorA and IorB subunits.

The catalysed reaction is indole-3-pyruvate + 2 oxidized [2Fe-2S]-[ferredoxin] + CoA = (indol-3-yl)acetyl-CoA + 2 reduced [2Fe-2S]-[ferredoxin] + CO2 + H(+). In terms of biological role, catalyzes the ferredoxin-dependent oxidative decarboxylation of arylpyruvates. This Methanothermobacter thermautotrophicus (strain ATCC 29096 / DSM 1053 / JCM 10044 / NBRC 100330 / Delta H) (Methanobacterium thermoautotrophicum) protein is Indolepyruvate oxidoreductase subunit IorB (iorB).